A 445-amino-acid chain; its full sequence is Fasciclin-like arabinogalactan protein 16 (445 aa).

The N-terminal stretch at M1–A23 is a signal peptide. 2 consecutive FAS1 domains span residues N35–L173 and V257–L400. N-linked (GlcNAc...) asparagine glycosylation is found at N72 and N279.

The protein belongs to the fasciclin-like AGP family.

It localises to the secreted. May be a cell surface adhesion protein. This chain is Fasciclin-like arabinogalactan protein 16 (FLA16), found in Arabidopsis thaliana (Mouse-ear cress).